A 499-amino-acid chain; its full sequence is Centrosomal protein of 57 kDa (499 aa).

Over residues 1 to 35 (MAAASVSETSASQFSNILAEPSKSNGSMVRHSSSP) the composition is skewed to polar residues. The interval 1–58 (MAAASVSETSASQFSNILAEPSKSNGSMVRHSSSPYVVYPPDKPFLNSDLRRSPNKPT) is disordered. Serine 53 bears the Phosphoserine mark. The interval 58–239 (TFAYPESNSR…KAAQLQTGLE (182 aa)) is centrosome localization domain (CLD). A coiled-coil region spans residues 63–241 (ESNSRAIFSA…AQLQTGLEVN (179 aa)). The segment at 277–490 (AVQPHYRLCL…KDMQSIQNSL (214 aa)) is mediates interaction with microtubules. 2 disordered regions span residues 334–357 (KQVSSRTGKSKKSATPPSSSSVNE) and 431–476 (KQKK…SRKN). The span at 346 to 357 (SATPPSSSSVNE) shows a compositional bias: low complexity. The stretch at 389–450 (TVELKDNLEC…KTLDEEGNSS (62 aa)) forms a coiled coil. Over residues 431–444 (KQKKELKATRKTLD) the composition is skewed to basic and acidic residues. Over residues 449 to 459 (SSSRSTTTGTT) the composition is skewed to low complexity. Basic and acidic residues predominate over residues 460–474 (NKKDFAKPRPGEKSR).

Belongs to the translokin family. In terms of assembly, homodimer and homooligomer. Interacts with FGF2 and RAP80. Does not interact with FGF1 or FGF2 isoform 24 kDa. Interacts with microtubules.

It localises to the nucleus. The protein resides in the cytoplasm. Its subcellular location is the cytoskeleton. It is found in the microtubule organizing center. The protein localises to the centrosome. Its function is as follows. Centrosomal protein which may be required for microtubule attachment to centrosomes. May act by forming ring-like structures around microtubules. Mediates nuclear translocation and mitogenic activity of the internalized growth factor FGF2. The protein is Centrosomal protein of 57 kDa (CEP57) of Bos taurus (Bovine).